Here is a 365-residue protein sequence, read N- to C-terminus: Sulfate/thiosulfate import ATP-binding protein CysA (365 aa).

Residues 3 to 237 (IEIANIKKSF…PATRFVLEFM (235 aa)) enclose the ABC transporter domain. ATP is bound at residue 35–42 (GPSGSGKT).

The protein belongs to the ABC transporter superfamily. Sulfate/tungstate importer (TC 3.A.1.6) family. The complex is composed of two ATP-binding proteins (CysA), two transmembrane proteins (CysT and CysW) and a solute-binding protein (CysP).

The protein resides in the cell inner membrane. The catalysed reaction is sulfate(out) + ATP + H2O = sulfate(in) + ADP + phosphate + H(+). It catalyses the reaction thiosulfate(out) + ATP + H2O = thiosulfate(in) + ADP + phosphate + H(+). Part of the ABC transporter complex CysAWTP involved in sulfate/thiosulfate import. Responsible for energy coupling to the transport system. The sequence is that of Sulfate/thiosulfate import ATP-binding protein CysA from Escherichia coli O6:H1 (strain CFT073 / ATCC 700928 / UPEC).